We begin with the raw amino-acid sequence, 577 residues long: NKAP family protein UM04995 (577 aa).

Residues 1–479 (MPTLAERLGS…YGGALLPGEG (479 aa)) form a disordered region. Basic and acidic residues predominate over residues 20–31 (KSSHDREQELRS). A compositionally biased stretch (polar residues) spans 36-49 (SKQTSRNTAHQDLA). Over residues 50–60 (SSERRSIDREL) the composition is skewed to basic and acidic residues. The span at 70–89 (SPLSSPQNGSSPRRQRGSPS) shows a compositional bias: low complexity. Basic and acidic residues-rich tracts occupy residues 127-163 (PREDVQSDRSPRSYPRRRDDQRWQANERRANQDDSRR), 170-193 (SGDRRRYFDSNDDRNPRQEDREAP), and 265-297 (DSSSRHRDKDKDKDRDKDKGKRDRKHSSSDKHH). 2 stretches are compositionally biased toward basic residues: residues 298–316 (SSSRSHRHHSSTSRRRRSS) and 325–336 (SRHRHTRSSRSH). The segment covering 340 to 350 (DDDDDDDEDVD) has biased composition (acidic residues). The span at 363–385 (KVSDGSDSGRSESETDSDSDARS) shows a compositional bias: basic and acidic residues. Residues 386-395 (SRHRRRHHKS) show a composition bias toward basic residues. Composition is skewed to basic and acidic residues over residues 396-408 (DRSSTHRRRESEK) and 417-439 (SESESSLHSEHNQKETAKSRRDS). The stretch at 529 to 570 (RKENQVISAEEKRTMLRLQAEEKAKKEREIVSQFKELVDTLQ) forms a coiled coil.

This sequence belongs to the NKAP family.

This Mycosarcoma maydis (Corn smut fungus) protein is NKAP family protein UM04995.